Reading from the N-terminus, the 466-residue chain is Soluble pyridine nucleotide transhydrogenase (466 aa).

Position 36 to 45 (36 to 45 (EKESSVGGGC)) interacts with FAD.

The protein belongs to the class-I pyridine nucleotide-disulfide oxidoreductase family. The cofactor is FAD.

Its subcellular location is the cytoplasm. The catalysed reaction is NAD(+) + NADPH = NADH + NADP(+). Its function is as follows. Conversion of NADPH, generated by peripheral catabolic pathways, to NADH, which can enter the respiratory chain for energy generation. The polypeptide is Soluble pyridine nucleotide transhydrogenase (Vibrio parahaemolyticus serotype O3:K6 (strain RIMD 2210633)).